Here is a 559-residue protein sequence, read N- to C-terminus: Arginine--tRNA ligase (559 aa).

The 'HIGH' region signature appears at 116-126 (ANPNGPLHVGH).

The protein belongs to the class-I aminoacyl-tRNA synthetase family.

The protein localises to the cytoplasm. The catalysed reaction is tRNA(Arg) + L-arginine + ATP = L-arginyl-tRNA(Arg) + AMP + diphosphate. The protein is Arginine--tRNA ligase of Methanosphaerula palustris (strain ATCC BAA-1556 / DSM 19958 / E1-9c).